Reading from the N-terminus, the 576-residue chain is Polyphenol oxidase 3 (576 aa).

Cu cation is bound by residues histidine 61, histidine 85, histidine 94, histidine 259, histidine 263, and histidine 296. The segment at residues 83-85 (CTH) is a cross-link (2'-(S-cysteinyl)-histidine (Cys-His)). A substrate-binding site is contributed by histidine 263. The propeptide at 393-576 (FVTTQTENPA…ILDDIIHRVN (184 aa)) is removed in mature form.

The protein belongs to the tyrosinase family. Tetramer composed of two subunits of PPO3 (H subunits) and two subunits of the as yet uncharacterized product of ORF239342 (L subunits). Cu(2+) serves as cofactor. In terms of processing, the C-ter is probably cleaved after Gly-392 since the mature active protein is smaller than the protein encoded by the gene.

The enzyme catalyses 2 L-dopa + O2 = 2 L-dopaquinone + 2 H2O. It carries out the reaction L-tyrosine + O2 = L-dopaquinone + H2O. Functionally, copper-containing oxidase that catalyzes both the o-hydroxylation of monophenols and the subsequent oxidation of the resulting o-diphenols into reactive o-quinones, which evolve spontaneously to produce intermediates, which associate in dark brown pigments. Involved in the initial step of melanin synthesis. Melanins constitute a mechanism of defense and resistance to stress such as UV radiations, free radicals, gamma rays, dehydratation and extreme temperatures, and contribute to the fungal cell-wall resistance against hydrolytic enzymes in avoiding cellular lysis. Fungal pigments are also involved in the formation and stability of spores. The protein is Polyphenol oxidase 3 (PPO3) of Agaricus bisporus (White button mushroom).